A 584-amino-acid polypeptide reads, in one-letter code: uncharacterized protein (584 aa).

Residues 15–35 (FIFFVLVFFICIIFGCIYESL) form a helical membrane-spanning segment. Composition is skewed to polar residues over residues 184–194 (DVSTENSYTHN) and 204–225 (GKRTYNNQSNNNLPYDNSSYNI). Residues 184–226 (DVSTENSYTHNNSRDDEPQNGKRTYNNQSNNNLPYDNSSYNIS) form a disordered region. 2 coiled-coil regions span residues 267-319 (DNYP…DNYP) and 436-477 (RDNH…HYKR).

It localises to the membrane. This is an uncharacterized protein from Plasmodium falciparum (isolate 3D7).